Consider the following 440-residue polypeptide: Glucoside xylosyltransferase 1 (440 aa).

Residues 1–6 (MRRYLR) lie on the Cytoplasmic side of the membrane. Residues 7 to 29 (VVVLCVACGFCSLLYAFSQLAVS) traverse the membrane as a helical; Signal-anchor for type II membrane protein segment. At 30 to 440 (LEEGTGGGGG…DRYARSPKEK (411 aa)) the chain is on the lumenal side. Residues N173, N237, and N278 are each glycosylated (N-linked (GlcNAc...) asparagine).

Belongs to the glycosyltransferase 8 family.

The protein resides in the membrane. The enzyme catalyses 3-O-(beta-D-glucosyl)-L-seryl-[EGF-like domain protein] + UDP-alpha-D-xylose = 3-O-[alpha-D-xylosyl-(1-&gt;3)-beta-D-glucosyl]-L-seryl-[EGF-like domain protein] + UDP + H(+). Glycosyltransferase which elongates the O-linked glucose attached to EGF-like repeats in the extracellular domain of Notch proteins by catalyzing the addition of xylose. The polypeptide is Glucoside xylosyltransferase 1 (GXYLT1) (Homo sapiens (Human)).